A 290-amino-acid chain; its full sequence is Arylamine N-acetyltransferase 2 (290 aa).

Residue C68 is the Acyl-thioester intermediate of the active site. Positions 103 and 104 each coordinate CoA. Position 106 to 107 (106 to 107 (VH)) interacts with substrate. Residues H107 and D122 contribute to the active site. CoA contacts are provided by Y208, T214, and S287.

It belongs to the arylamine N-acetyltransferase family.

It localises to the cytoplasm. It carries out the reaction an arylamine + acetyl-CoA = an N-acetylarylamine + CoA. It catalyses the reaction an N-hydroxyarylamine + acetyl-CoA = an N-acetoxyarylamine + CoA. Its function is as follows. Catalyzes the N- or O-acetylation of various arylamine and heterocyclic amine substrates. Participates in the detoxification of a plethora of hydrazine and arylamine drugs, and is able to bioactivate several known carcinogens. In Homo sapiens (Human), this protein is Arylamine N-acetyltransferase 2 (NAT2).